The primary structure comprises 197 residues: 7-methyl-GTP pyrophosphatase (197 aa).

Catalysis depends on D72, which acts as the Proton acceptor.

This sequence belongs to the Maf family. YceF subfamily. A divalent metal cation serves as cofactor.

The protein resides in the cytoplasm. It catalyses the reaction N(7)-methyl-GTP + H2O = N(7)-methyl-GMP + diphosphate + H(+). Nucleoside triphosphate pyrophosphatase that hydrolyzes 7-methyl-GTP (m(7)GTP). May have a dual role in cell division arrest and in preventing the incorporation of modified nucleotides into cellular nucleic acids. This is 7-methyl-GTP pyrophosphatase from Bordetella avium (strain 197N).